The primary structure comprises 511 residues: ATP synthase subunit alpha (511 aa).

169–176 (GDRKTGKT) contributes to the ATP binding site.

It belongs to the ATPase alpha/beta chains family. F-type ATPases have 2 components, CF(1) - the catalytic core - and CF(0) - the membrane proton channel. CF(1) has five subunits: alpha(3), beta(3), gamma(1), delta(1), epsilon(1). CF(0) has three main subunits: a(1), b(2) and c(9-12). The alpha and beta chains form an alternating ring which encloses part of the gamma chain. CF(1) is attached to CF(0) by a central stalk formed by the gamma and epsilon chains, while a peripheral stalk is formed by the delta and b chains.

Its subcellular location is the cell membrane. It catalyses the reaction ATP + H2O + 4 H(+)(in) = ADP + phosphate + 5 H(+)(out). Produces ATP from ADP in the presence of a proton gradient across the membrane. The alpha chain is a regulatory subunit. The protein is ATP synthase subunit alpha of Latilactobacillus sakei subsp. sakei (strain 23K) (Lactobacillus sakei subsp. sakei).